The following is a 261-amino-acid chain: Glutathione S-transferase theta-1 (261 aa).

The GST N-terminal domain maps to 2-101; the sequence is GLELYLDLLS…YLSRKYNTPD (100 aa). Glutathione-binding positions include 72 to 73 and 85 to 86; these read KV and EC. In terms of domain architecture, GST C-terminal spans 107–248; that stretch reads DIKKRAQVDE…LSNIQIDPQL (142 aa).

The protein belongs to the GST superfamily. Theta family. Homodimer.

The protein localises to the cytoplasm. The catalysed reaction is RX + glutathione = an S-substituted glutathione + a halide anion + H(+). Functionally, conjugation of reduced glutathione to a wide number of exogenous and endogenous hydrophobic electrophiles. This chain is Glutathione S-transferase theta-1 (GSTT1), found in Gallus gallus (Chicken).